The sequence spans 150 residues: MVIALKRFSFLASIATLTVLNACATISLSDKSGEFYINNIPSSAELHRINYDLTFSLGFTNRIQTKKKNEVNFVAFYGTGLLIDWKEGNQYQPFRVYLATNVHVAAGLKNEADYLPYSQPDAELGWTVDFRLGKYTNVKDFVSPNENRIT.

The first 22 residues, 1–22 (MVIALKRFSFLASIATLTVLNA), serve as a signal peptide directing secretion. Cysteine 23 carries the N-palmitoyl cysteine lipid modification. Cysteine 23 carries the S-diacylglycerol cysteine lipid modification.

It belongs to the MG067/MG068/MG395 family.

It is found in the cell membrane. This is an uncharacterized protein from Mycoplasma pneumoniae (strain ATCC 29342 / M129 / Subtype 1) (Mycoplasmoides pneumoniae).